Reading from the N-terminus, the 575-residue chain is CCR4-NOT transcription complex subunit 4 (575 aa).

The RING-type; degenerate zinc finger occupies 14–57 (CPLCMEPLEIDDINFFPCTCGYQICRFCWHRIRTDENGLCPACR). Positions 68 to 104 (KPLSQEELQRIKNEKKQKQNERKQKISENRKHLASVR) form a coiled coil. The residue at position 71 (S71) is a Phosphoserine. An RRM domain is found at 109 to 189 (NLVFVVGLSQ…VVDGRTLKAS (81 aa)). Residues 190-217 (LGTTKYCSYFLKNMQCPKPDCMYLHELG) form a C3H1-type zinc finger. 2 disordered regions span residues 256-372 (TGSV…EPQS) and 424-458 (SVQD…HPAA). Residues 281–299 (DSLSIGNGDNSQQISNSDT) show a composition bias toward polar residues. S301 bears the Phosphoserine mark. Residues 307-322 (SKSNPVIPISSSNHSA) are compositionally biased toward polar residues. S324 is subject to Phosphoserine. Positions 345 to 356 (NPIPSGLPPFPS) are enriched in pro residues. Low complexity predominate over residues 428-441 (QPSLSPTSLQNSSS). Phosphoserine is present on S432. Asymmetric dimethylarginine occurs at positions 475 and 483. S490 bears the Phosphoserine mark. Residue R497 is modified to Asymmetric dimethylarginine. Residues 553–575 (PLSTSSHSLQQGQQPTSLHTTVA) are disordered.

Interacts with CNOT1 via its C-terminus but does not stably associate with the CCR4-NOT complex. Interacts (via RING domain) with UBE2D2. Interacts with ABCE1, PINK1 and PELO. In terms of processing, autoubiquitinated.

The protein resides in the cytoplasm. It localises to the nucleus. The catalysed reaction is S-ubiquitinyl-[E2 ubiquitin-conjugating enzyme]-L-cysteine + [acceptor protein]-L-lysine = [E2 ubiquitin-conjugating enzyme]-L-cysteine + N(6)-ubiquitinyl-[acceptor protein]-L-lysine.. It functions in the pathway protein modification; protein ubiquitination. Functionally, has E3 ubiquitin ligase activity, promoting ubiquitination and degradation of target proteins. Involved in activation of the JAK/STAT pathway. Catalyzes ubiquitination of methylated RBM15. Plays a role in quality control of translation of mitochondrial outer membrane-localized mRNA. As part of the PINK1-regulated signaling, upon mitochondria damage, ubiquitinates ABCE1 and thereby recruits autophagy receptors to the mitochondrial outer membrane to initiate mitophagy. The chain is CCR4-NOT transcription complex subunit 4 (CNOT4) from Homo sapiens (Human).